The following is a 259-amino-acid chain: Major cell-binding factor (259 aa).

The first 26 residues, 1-26 (MVFRKSLLKLAVFALGACVAFSNANA), serve as a signal peptide directing secretion.

The protein belongs to the bacterial solute-binding protein 3 family.

The protein localises to the cell surface. Its function is as follows. Common antigen and a major cell adherence molecule. Most probably involved, with PEB1C, in a binding-protein-dependent transport system for an amino acid. May be involved in binding to intestinal cells. In Campylobacter jejuni subsp. jejuni serotype O:2 (strain ATCC 700819 / NCTC 11168), this protein is Major cell-binding factor (peb1A).